We begin with the raw amino-acid sequence, 317 residues long: tRNA-cytidine(32) 2-sulfurtransferase (317 aa).

Residues 1–29 (MNTANNTLPTAADWAGEDGAPDAADTRKI) are disordered. Positions 65-70 (SGGKDS) match the PP-loop motif motif. Residues Cys-140, Cys-143, and Cys-231 each contribute to the [4Fe-4S] cluster site.

Belongs to the TtcA family. In terms of assembly, homodimer. It depends on Mg(2+) as a cofactor. The cofactor is [4Fe-4S] cluster.

It localises to the cytoplasm. The enzyme catalyses cytidine(32) in tRNA + S-sulfanyl-L-cysteinyl-[cysteine desulfurase] + AH2 + ATP = 2-thiocytidine(32) in tRNA + L-cysteinyl-[cysteine desulfurase] + A + AMP + diphosphate + H(+). Its pathway is tRNA modification. Its function is as follows. Catalyzes the ATP-dependent 2-thiolation of cytidine in position 32 of tRNA, to form 2-thiocytidine (s(2)C32). The sulfur atoms are provided by the cysteine/cysteine desulfurase (IscS) system. This Acidovorax ebreus (strain TPSY) (Diaphorobacter sp. (strain TPSY)) protein is tRNA-cytidine(32) 2-sulfurtransferase.